The sequence spans 387 residues: 3-ketoacyl-CoA thiolase (387 aa).

Cys91 (acyl-thioester intermediate) is an active-site residue. Catalysis depends on proton acceptor residues His343 and Cys373.

It belongs to the thiolase-like superfamily. Thiolase family. Heterotetramer of two alpha chains (FadB) and two beta chains (FadA).

It is found in the cytoplasm. The catalysed reaction is an acyl-CoA + acetyl-CoA = a 3-oxoacyl-CoA + CoA. Its pathway is lipid metabolism; fatty acid beta-oxidation. Its function is as follows. Catalyzes the final step of fatty acid oxidation in which acetyl-CoA is released and the CoA ester of a fatty acid two carbons shorter is formed. This Pectobacterium carotovorum subsp. carotovorum (strain PC1) protein is 3-ketoacyl-CoA thiolase.